The primary structure comprises 275 residues: Hydroxyethylthiazole kinase (275 aa).

Residue Met50 coordinates substrate. Arg126 and Ser171 together coordinate ATP. Ala200 contributes to the substrate binding site.

It belongs to the Thz kinase family. Requires Mg(2+) as cofactor.

The enzyme catalyses 5-(2-hydroxyethyl)-4-methylthiazole + ATP = 4-methyl-5-(2-phosphooxyethyl)-thiazole + ADP + H(+). It functions in the pathway cofactor biosynthesis; thiamine diphosphate biosynthesis; 4-methyl-5-(2-phosphoethyl)-thiazole from 5-(2-hydroxyethyl)-4-methylthiazole: step 1/1. Catalyzes the phosphorylation of the hydroxyl group of 4-methyl-5-beta-hydroxyethylthiazole (THZ). This Acinetobacter baumannii (strain ATCC 17978 / DSM 105126 / CIP 53.77 / LMG 1025 / NCDC KC755 / 5377) protein is Hydroxyethylthiazole kinase.